The primary structure comprises 367 residues: tRNA 2-selenouridine synthase (367 aa).

In terms of domain architecture, Rhodanese spans 12 to 135 (FLSGVAMLDV…MRGFLIETTD (124 aa)). The S-selanylcysteine intermediate role is filled by Cys95.

The protein belongs to the SelU family. As to quaternary structure, monomer.

It catalyses the reaction 5-methylaminomethyl-2-thiouridine(34) in tRNA + selenophosphate + (2E)-geranyl diphosphate + H2O + H(+) = 5-methylaminomethyl-2-selenouridine(34) in tRNA + (2E)-thiogeraniol + phosphate + diphosphate. The catalysed reaction is 5-methylaminomethyl-2-thiouridine(34) in tRNA + (2E)-geranyl diphosphate = 5-methylaminomethyl-S-(2E)-geranyl-thiouridine(34) in tRNA + diphosphate. It carries out the reaction 5-methylaminomethyl-S-(2E)-geranyl-thiouridine(34) in tRNA + selenophosphate + H(+) = 5-methylaminomethyl-2-(Se-phospho)selenouridine(34) in tRNA + (2E)-thiogeraniol. The enzyme catalyses 5-methylaminomethyl-2-(Se-phospho)selenouridine(34) in tRNA + H2O = 5-methylaminomethyl-2-selenouridine(34) in tRNA + phosphate. Its function is as follows. Involved in the post-transcriptional modification of the uridine at the wobble position (U34) of tRNA(Lys), tRNA(Glu) and tRNA(Gln). Catalyzes the conversion of 2-thiouridine (S2U-RNA) to 2-selenouridine (Se2U-RNA). Acts in a two-step process involving geranylation of 2-thiouridine (S2U) to S-geranyl-2-thiouridine (geS2U) and subsequent selenation of the latter derivative to 2-selenouridine (Se2U) in the tRNA chain. The sequence is that of tRNA 2-selenouridine synthase from Cupriavidus necator (strain ATCC 17699 / DSM 428 / KCTC 22496 / NCIMB 10442 / H16 / Stanier 337) (Ralstonia eutropha).